The following is a 122-amino-acid chain: Large ribosomal subunit protein uL14 (122 aa).

It belongs to the universal ribosomal protein uL14 family. Part of the 50S ribosomal subunit. Forms a cluster with proteins L3 and L19. In the 70S ribosome, L14 and L19 interact and together make contacts with the 16S rRNA in bridges B5 and B8.

Binds to 23S rRNA. Forms part of two intersubunit bridges in the 70S ribosome. The chain is Large ribosomal subunit protein uL14 from Chlorobium phaeobacteroides (strain BS1).